Consider the following 95-residue polypeptide: MSYTITAQTRTEIGKGSSRRLRHAGKVPAVIYGAGKEAVSIEFEHRSIINIQTNDDFYNSDITIVLDGKEVKVRVQAMQRHAFKPMIEHVDFKFA.

Belongs to the bacterial ribosomal protein bL25 family. In terms of assembly, part of the 50S ribosomal subunit; part of the 5S rRNA/L5/L18/L25 subcomplex. Contacts the 5S rRNA. Binds to the 5S rRNA independently of L5 and L18.

Its function is as follows. This is one of the proteins that binds to the 5S RNA in the ribosome where it forms part of the central protuberance. This Shewanella loihica (strain ATCC BAA-1088 / PV-4) protein is Large ribosomal subunit protein bL25.